Reading from the N-terminus, the 1066-residue chain is DNA-directed RNA polymerase subunit beta (1066 aa).

The protein belongs to the RNA polymerase beta chain family. In plastids the minimal PEP RNA polymerase catalytic core is composed of four subunits: alpha, beta, beta', and beta''. When a (nuclear-encoded) sigma factor is associated with the core the holoenzyme is formed, which can initiate transcription.

It is found in the plastid. The protein resides in the chloroplast. It carries out the reaction RNA(n) + a ribonucleoside 5'-triphosphate = RNA(n+1) + diphosphate. Functionally, DNA-dependent RNA polymerase catalyzes the transcription of DNA into RNA using the four ribonucleoside triphosphates as substrates. This is DNA-directed RNA polymerase subunit beta from Psilotum nudum (Whisk fern).